The primary structure comprises 401 residues: Glutamyl-tRNA reductase (401 aa).

Substrate is bound by residues 45-48 (TCNR), S101, 106-108 (EDQ), and Q112. The active-site Nucleophile is C46. Residue 177 to 182 (GYGDVG) coordinates NADP(+).

The protein belongs to the glutamyl-tRNA reductase family. Homodimer.

The catalysed reaction is (S)-4-amino-5-oxopentanoate + tRNA(Glu) + NADP(+) = L-glutamyl-tRNA(Glu) + NADPH + H(+). The protein operates within porphyrin-containing compound metabolism; protoporphyrin-IX biosynthesis; 5-aminolevulinate from L-glutamyl-tRNA(Glu): step 1/2. Its function is as follows. Catalyzes the NADPH-dependent reduction of glutamyl-tRNA(Glu) to glutamate 1-semialdehyde (GSA). This is Glutamyl-tRNA reductase from Clostridium botulinum (strain Alaska E43 / Type E3).